The sequence spans 142 residues: 3-hydroxyacyl-[acyl-carrier-protein] dehydratase FabZ (142 aa).

Histidine 48 is a catalytic residue.

Belongs to the thioester dehydratase family. FabZ subfamily.

It localises to the cytoplasm. The catalysed reaction is a (3R)-hydroxyacyl-[ACP] = a (2E)-enoyl-[ACP] + H2O. Its function is as follows. Involved in unsaturated fatty acids biosynthesis. Catalyzes the dehydration of short chain beta-hydroxyacyl-ACPs and long chain saturated and unsaturated beta-hydroxyacyl-ACPs. This chain is 3-hydroxyacyl-[acyl-carrier-protein] dehydratase FabZ, found in Desulforamulus reducens (strain ATCC BAA-1160 / DSM 100696 / MI-1) (Desulfotomaculum reducens).